We begin with the raw amino-acid sequence, 291 residues long: Homoserine kinase (291 aa).

ATP is bound at residue 79 to 89 (PLARGLGSSSA).

This sequence belongs to the GHMP kinase family. Homoserine kinase subfamily.

It is found in the cytoplasm. The enzyme catalyses L-homoserine + ATP = O-phospho-L-homoserine + ADP + H(+). Its pathway is amino-acid biosynthesis; L-threonine biosynthesis; L-threonine from L-aspartate: step 4/5. Catalyzes the ATP-dependent phosphorylation of L-homoserine to L-homoserine phosphate. This is Homoserine kinase from Leuconostoc citreum (strain KM20).